A 143-amino-acid polypeptide reads, in one-letter code: Hemoglobin subunit alpha-1 (143 aa).

S2 bears the N-acetylserine mark. Positions 2–143 (SLTEKDKAAV…VSLALAERYR (142 aa)) constitute a Globin domain. H60 provides a ligand contact to O2. H89 lines the heme b pocket.

Belongs to the globin family. Hb 1 is a heterotetramer of two alpha-1 and two beta chains. As to expression, red blood cells.

Involved in oxygen transport from gills to the various peripheral tissues. This Cottoperca gobio (Frogmouth) protein is Hemoglobin subunit alpha-1 (hba1).